A 232-amino-acid polypeptide reads, in one-letter code: Purine nucleoside phosphorylase DeoD-type (232 aa).

His4 is a binding site for a purine D-ribonucleoside. Residues Gly20, Arg24, Arg43, and 87–90 (RIGT) each bind phosphate. A purine D-ribonucleoside-binding positions include 179–181 (EME) and 203–204 (SD). Asp204 acts as the Proton donor in catalysis.

It belongs to the PNP/UDP phosphorylase family. In terms of assembly, homohexamer; trimer of homodimers.

It carries out the reaction a purine D-ribonucleoside + phosphate = a purine nucleobase + alpha-D-ribose 1-phosphate. The enzyme catalyses a purine 2'-deoxy-D-ribonucleoside + phosphate = a purine nucleobase + 2-deoxy-alpha-D-ribose 1-phosphate. Functionally, catalyzes the reversible phosphorolytic breakdown of the N-glycosidic bond in the beta-(deoxy)ribonucleoside molecules, with the formation of the corresponding free purine bases and pentose-1-phosphate. The sequence is that of Purine nucleoside phosphorylase DeoD-type from Caldanaerobacter subterraneus subsp. tengcongensis (strain DSM 15242 / JCM 11007 / NBRC 100824 / MB4) (Thermoanaerobacter tengcongensis).